The sequence spans 440 residues: Xylose isomerase (440 aa).

Residues His100 and Asp103 contribute to the active site. Mg(2+) contacts are provided by Glu231, Glu267, His270, Asp295, Asp306, Asp308, and Asp338.

This sequence belongs to the xylose isomerase family. In terms of assembly, homotetramer. It depends on Mg(2+) as a cofactor.

It localises to the cytoplasm. The enzyme catalyses alpha-D-xylose = alpha-D-xylulofuranose. This is Xylose isomerase from Burkholderia cenocepacia (strain ATCC BAA-245 / DSM 16553 / LMG 16656 / NCTC 13227 / J2315 / CF5610) (Burkholderia cepacia (strain J2315)).